The primary structure comprises 308 residues: Phenylcoumaran benzylic ether reductase PT1 (308 aa).

NADP(+) is bound by residues Gly-11–Gly-17, Arg-36, and Lys-46. The active-site Proton acceptor is Lys-134. Arg-138 provides a ligand contact to NADP(+).

This sequence belongs to the NmrA-type oxidoreductase family. Isoflavone reductase subfamily.

It carries out the reaction (-)-dehydrodiconiferyl alcohol + NADPH + H(+) = (S)-isodihydrodehydrodiconiferyl alcohol + NADP(+). The enzyme catalyses (+)-dehydrodiconiferyl alcohol + NADPH + H(+) = (R)-isodihydrodehydrodiconiferyl alcohol + NADP(+). It catalyses the reaction (2R,3S)-dihydrodehydrodiconiferyl alcohol + NADPH + H(+) = (S)-tetrahydrodehydrodiconiferyl alcohol + NADP(+). The catalysed reaction is (2S,3R)-dihydrodehydrodiconiferyl alcohol + NADPH + H(+) = (R)-tetrahydrodehydrodiconiferyl alcohol + NADP(+). Functionally, oxidoreductase involved in lignan biosynthesis. Catalyzes the NADPH-dependent reduction of phenylcoumaran benzylic ethers. Converts dehydrodiconiferyl alcohol (DDC) to isodihydrodehydrodiconiferyl alcohol (IDDDC), and dihydrodehydrodiconiferyl alcohol (DDDC) to tetrahydrodehydrodiconiferyl alcohol (TDDC). The sequence is that of Phenylcoumaran benzylic ether reductase PT1 from Pinus taeda (Loblolly pine).